Reading from the N-terminus, the 170-residue chain is Adenine phosphoribosyltransferase (170 aa).

It belongs to the purine/pyrimidine phosphoribosyltransferase family. In terms of assembly, homodimer.

It localises to the cytoplasm. It carries out the reaction AMP + diphosphate = 5-phospho-alpha-D-ribose 1-diphosphate + adenine. It participates in purine metabolism; AMP biosynthesis via salvage pathway; AMP from adenine: step 1/1. In terms of biological role, catalyzes a salvage reaction resulting in the formation of AMP, that is energically less costly than de novo synthesis. The chain is Adenine phosphoribosyltransferase from Fervidobacterium nodosum (strain ATCC 35602 / DSM 5306 / Rt17-B1).